We begin with the raw amino-acid sequence, 1253 residues long: MKKTLQDEIEAILRKRIMVLDGGMGTMIQRYKLSEEHFQGQEFKDHSRPLKGNNDILSITQPDIIYQIHKEYLLAGADIIETNTFSSTSIAQADYGLEHLAYRMNKCSADVARKAAEEITLQTGVKRFVAGALGPTNKTLSVSPSVERPDYRNITFDELVDAYQEQAKGLLDGRVDILLIETIFDTANAKAALFAIQNLFEENYAPPRPIFISGTIVDKSGRTLSGQTGEAFVTSVSHSDPLCIGLNCSLGAAEMRPFIETIGKCTTAYVLCYPNAGLPNTFGDYDETPSTMATHLKDFAVDGLVNIVGGCCGSTPDHIREIAEAVKKCKPRVPPASVFEGHMLLSGLEPFRIGPYTNFVNIGERCNVAGSRKFAKLIMAGNYEEALSIAKAQVEMGAQVLDINMDDGMLDGPSAMTRFCNSIASEPDIAKVPLCIDSSNFAVIEAGLKCCQGKCIVNSISLKEGEGDFLEKARKIKKFGAAVVVMAFDEEGQATETDVKVNVCTRAYHLLVDKVGFNPNDIIFDPNILTIGTGMEEHNLYAINFIHATRVIKETLPGVRISGGLSNLSFSFRGMEAIREAMHGVFLYHAIKFGMDMGIVNAGNLPVYDAIHKDLLQLCEDLIWNKDSEATEKLLRYAQTHGTGGKKVIQTDEWRNGSIEERLEYALVKGIEKHIVEDTEEARLNGEKYPRPLNIIEGPLMNGMKVVGDLFGAGKMFLPQVIKSARVMKKAVGHLIPFMEKEREEARLINGSVEEEDPYQGTIVLATVKGDVHDIGKNIVGVVLACNNFRVIDLGVMTPCDKILQAALDHKADIIGLSGLITPSLDEMIFVAKEMERLAIKIPLLIGGATTSRTHTAVKIAPRYSAPVIHVLDASKSVVVCSQLLDENLRDDYFEEILEEYEDIRQDHYESLKERKYVPLSQARKHGFHIDWLSEPHPVKPTFIGTQVFEDYNLQKLVDYIDWKPFFDVWQLRGKYPNRGFPKIFNDKAVGEEARKVYNDAQNMLNILISQKKLQARGVVGFWPAQSVQDDIHLYAEGVVPQAAEPIATFYGLRQQAEKDSSSTDPYHCLSDFIAPLHSGVCDYLGLFAVACFGVEELSKTYEDDGDDYSSIMVKALGDRLAEAFAEELHERVRRELWAYSRSEQLGVPDLRRLRYEGIRPAPGYPSQPDHTEKLTMWRLASIEQATGIRLTESLAMAPASAVSGLYFSNVKAKYFAVGKISKDQTEDYALRKNMPVAEVEKWLGPILGYDTD.

Positions 6 to 326 (QDEIEAILRK…DHIREIAEAV (321 aa)) constitute a Hcy-binding domain. Zn(2+) is bound by residues cysteine 248, cysteine 311, and cysteine 312. The Pterin-binding domain maps to 359–620 (FVNIGERCNV…IHKDLLQLCE (262 aa)). (6S)-5,6,7,8-tetrahydrofolate-binding positions include 370-372 (GSR), aspartate 437, asparagine 458, aspartate 525, asparagine 567, arginine 573, and arginine 579. Positions 650-747 (QTDEWRNGSI…FMEKEREEAR (98 aa)) constitute a B12-binding N-terminal domain. Residues glutamate 697, 770 to 774 (GDVHD), histidine 773, serine 818, threonine 822, and alanine 874 contribute to the methylcob(III)alamin site. The region spanning 760-895 (QGTIVLATVK…DENLRDDYFE (136 aa)) is the B12-binding domain. Residues 911 to 1253 (SLKERKYVPL…LGPILGYDTD (343 aa)) form the AdoMet activation domain. S-adenosyl-L-methionine-binding positions include aspartate 962, arginine 1160, and 1215–1216 (YF). Position 1252 is a phosphothreonine (threonine 1252).

This sequence belongs to the vitamin-B12 dependent methionine synthase family. In terms of assembly, monomer. Dimer. Forms a multiprotein complex with MMACHC, MMADHC and MTRR. Requires methylcob(III)alamin as cofactor. It depends on Zn(2+) as a cofactor.

The protein localises to the cytoplasm. It carries out the reaction (6S)-5-methyl-5,6,7,8-tetrahydrofolate + L-homocysteine = (6S)-5,6,7,8-tetrahydrofolate + L-methionine. It participates in amino-acid biosynthesis; L-methionine biosynthesis via de novo pathway; L-methionine from L-homocysteine (MetH route): step 1/1. Functionally, catalyzes the transfer of a methyl group from methylcob(III)alamin (MeCbl) to homocysteine, yielding enzyme-bound cob(I)alamin and methionine in the cytosol. MeCbl is an active form of cobalamin (vitamin B12) used as a cofactor for methionine biosynthesis. Cob(I)alamin form is regenerated to MeCbl by a transfer of a methyl group from 5-methyltetrahydrofolate. The processing of cobalamin in the cytosol occurs in a multiprotein complex composed of at least MMACHC, MMADHC, MTRR (methionine synthase reductase) and MTR which may contribute to shuttle safely and efficiently cobalamin towards MTR in order to produce methionine. The sequence is that of Methionine synthase from Mus musculus (Mouse).